The sequence spans 239 residues: Ribonuclease 3 (239 aa).

An RNase III domain is found at 12–137 (RAKLEGLIGH…LIAAIYLDGG (126 aa)). E50 contributes to the Mg(2+) binding site. D54 is an active-site residue. D123 and E126 together coordinate Mg(2+). E126 is an active-site residue. Residues 162–231 (DAKTELQEWS…ATKMLEREGI (70 aa)) enclose the DRBM domain.

Belongs to the ribonuclease III family. As to quaternary structure, homodimer. Mg(2+) is required as a cofactor.

It is found in the cytoplasm. It catalyses the reaction Endonucleolytic cleavage to 5'-phosphomonoester.. Its function is as follows. Digests double-stranded RNA. Involved in the processing of primary rRNA transcript to yield the immediate precursors to the large and small rRNAs (23S and 16S). Processes some mRNAs, and tRNAs when they are encoded in the rRNA operon. Processes pre-crRNA and tracrRNA of type II CRISPR loci if present in the organism. This chain is Ribonuclease 3, found in Rhizobium johnstonii (strain DSM 114642 / LMG 32736 / 3841) (Rhizobium leguminosarum bv. viciae).